Consider the following 201-residue polypeptide: Phospholipase A2 inhibitor NAI (201 aa).

Residues 1–19 form the signal peptide; that stretch reads MKSLQIICLLFVLVARGSC. 8 cysteine pairs are disulfide-bonded: Cys-22/Cys-47, Cys-25/Cys-32, Cys-40/Cys-68, Cys-74/Cys-95, Cys-96/Cys-101, Cys-119/Cys-144, Cys-137/Cys-166, and Cys-170/Cys-191. Asn-176 is a glycosylation site (N-linked (GlcNAc...) asparagine).

The protein belongs to the CNF-like-inhibitor family. Heterotrimer of 2 subunits A and 1 subunit B; non-covalently linked. In terms of processing, N-glycosylated, probably by biantennary structure. Glycosylation does not change PLA2 inhibitory activity. In terms of tissue distribution, expressed by the liver.

The protein resides in the secreted. Its function is as follows. Inhibits the enzymatic activity of all phospholipase A2 tested, binding them with micromole to nanomole affinity. This chain is Phospholipase A2 inhibitor NAI, found in Notechis ater (Black tiger snake).